Reading from the N-terminus, the 253-residue chain is Probable transcriptional regulatory protein AM1_1847 (253 aa).

This sequence belongs to the TACO1 family.

The protein resides in the cytoplasm. The chain is Probable transcriptional regulatory protein AM1_1847 from Acaryochloris marina (strain MBIC 11017).